The sequence spans 730 residues: ATP-binding cassette sub-family D member 1 (730 aa).

The next 4 helical transmembrane spans lie at 24 to 44, 137 to 157, 169 to 189, and 276 to 296; these read AFSY…VTIP, FCLI…GALV, ALVL…NSMI, and ANII…AHIL. The ABC transmembrane type-1 domain occupies 136–373; it reads TFCLISRTFL…WFIMLEQFFM (238 aa). The ABC transporter domain occupies 505–727; that stretch reads ISLRAVPVVT…MNSDEEQKGQ (223 aa). Residue 538-545 coordinates ATP; the sequence is GPNGCGKS.

The protein belongs to the ABC transporter superfamily. ABCD family. Peroxisomal fatty acyl CoA transporter (TC 3.A.1.203) subfamily.

It localises to the peroxisome membrane. It catalyses the reaction an acyl-CoA(out) + ATP + H2O = an acyl-CoA(in) + ADP + phosphate + H(+). Its function is as follows. Plays a role in the transport of free very-long-chain fatty acids (VLCFAs) as well as their CoA-esters across the peroxisomal membrane by acting as an ATP-specific binding subunit releasing ADP after ATP hydrolysis. Thus, plays a role in regulation of VLCFAs and energy metabolism namely, in the degradation and biosynthesis of fatty acids by beta-oxidation, mitochondrial function and microsomal fatty acid elongation. The sequence is that of ATP-binding cassette sub-family D member 1 from Drosophila melanogaster (Fruit fly).